The primary structure comprises 121 residues: Small ribosomal subunit protein uS13 (121 aa).

The disordered stretch occupies residues 94–121 (RGLPVRGQSTKNNARTRKGPKRTVGAKR). Residues 107–121 (ARTRKGPKRTVGAKR) show a composition bias toward basic residues.

This sequence belongs to the universal ribosomal protein uS13 family. As to quaternary structure, part of the 30S ribosomal subunit. Forms a loose heterodimer with protein S19. Forms two bridges to the 50S subunit in the 70S ribosome.

Located at the top of the head of the 30S subunit, it contacts several helices of the 16S rRNA. In the 70S ribosome it contacts the 23S rRNA (bridge B1a) and protein L5 of the 50S subunit (bridge B1b), connecting the 2 subunits; these bridges are implicated in subunit movement. Contacts the tRNAs in the A and P-sites. This is Small ribosomal subunit protein uS13 from Natranaerobius thermophilus (strain ATCC BAA-1301 / DSM 18059 / JW/NM-WN-LF).